The sequence spans 313 residues: Porphobilinogen deaminase (313 aa).

S-(dipyrrolylmethanemethyl)cysteine is present on cysteine 242.

Belongs to the HMBS family. In terms of assembly, monomer. Dipyrromethane serves as cofactor.

It carries out the reaction 4 porphobilinogen + H2O = hydroxymethylbilane + 4 NH4(+). The protein operates within porphyrin-containing compound metabolism; protoporphyrin-IX biosynthesis; coproporphyrinogen-III from 5-aminolevulinate: step 2/4. Functionally, tetrapolymerization of the monopyrrole PBG into the hydroxymethylbilane pre-uroporphyrinogen in several discrete steps. This chain is Porphobilinogen deaminase, found in Photorhabdus laumondii subsp. laumondii (strain DSM 15139 / CIP 105565 / TT01) (Photorhabdus luminescens subsp. laumondii).